A 147-amino-acid chain; its full sequence is Large ribosomal subunit protein uL13 (147 aa).

The protein belongs to the universal ribosomal protein uL13 family. In terms of assembly, part of the 50S ribosomal subunit.

In terms of biological role, this protein is one of the early assembly proteins of the 50S ribosomal subunit, although it is not seen to bind rRNA by itself. It is important during the early stages of 50S assembly. The chain is Large ribosomal subunit protein uL13 from Arthrobacter sp. (strain FB24).